The chain runs to 308 residues: NAD-dependent protein deacylase SIR4 (308 aa).

The N-terminal 16 residues, methionine 1–alanine 16, are a transit peptide targeting the mitochondrion. The Deacetylase sirtuin-type domain maps to threonine 28 to leucine 308. Residues glycine 53–histidine 73 and glutamine 129–aspartate 132 each bind NAD(+). Catalysis depends on histidine 147, which acts as the Proton acceptor. Zn(2+) contacts are provided by cysteine 155, cysteine 158, cysteine 211, and cysteine 214. NAD(+) contacts are provided by residues glycine 251–serine 253, asparagine 277–glycine 279, and isoleucine 297.

It belongs to the sirtuin family. Class II subfamily. Requires Zn(2+) as cofactor.

It is found in the mitochondrion matrix. It catalyses the reaction N(6)-acetyl-L-lysyl-[protein] + NAD(+) + H2O = 2''-O-acetyl-ADP-D-ribose + nicotinamide + L-lysyl-[protein]. Functionally, NAD-dependent protein deacylase. Catalyzes the NAD-dependent hydrolysis of acyl groups from lysine residues. The polypeptide is NAD-dependent protein deacylase SIR4 (Monosiga brevicollis (Choanoflagellate)).